The sequence spans 426 residues: Phosphoribosylamine--glycine ligase (426 aa).

An ATP-grasp domain is found at 107–313 (KDFMQKYGVK…FLNVINSALN (207 aa)). An ATP-binding site is contributed by 133 to 194 (LDKISYPVVI…EEFLDGVEIS (62 aa)). Positions 283 and 285 each coordinate Mg(2+).

Belongs to the GARS family. The cofactor is Mg(2+). Mn(2+) is required as a cofactor.

It carries out the reaction 5-phospho-beta-D-ribosylamine + glycine + ATP = N(1)-(5-phospho-beta-D-ribosyl)glycinamide + ADP + phosphate + H(+). It functions in the pathway purine metabolism; IMP biosynthesis via de novo pathway; N(1)-(5-phospho-D-ribosyl)glycinamide from 5-phospho-alpha-D-ribose 1-diphosphate: step 2/2. The chain is Phosphoribosylamine--glycine ligase from Fusobacterium nucleatum subsp. nucleatum (strain ATCC 25586 / DSM 15643 / BCRC 10681 / CIP 101130 / JCM 8532 / KCTC 2640 / LMG 13131 / VPI 4355).